Consider the following 485-residue polypeptide: Aspartyl protease family protein 2 (485 aa).

The first 23 residues, 1 to 23 (MVGRRKALLFSLCFFFLSLPSFS), serve as a signal peptide directing secretion. The interval 43 to 71 (PVSFQPDSDSESLLESEFESGSDSESSSS) is disordered. Acidic residues predominate over residues 50–64 (SDSESLLESEFESGS). Residues 142–480 (YFTRLGVGTP…DLASSRVGFA (339 aa)) form the Peptidase A1 domain. Catalysis depends on residues Asp160 and Asp365.

The protein belongs to the peptidase A1 family.

Its function is as follows. Aspartyl protease. Not able to cleave BAG6. The sequence is that of Aspartyl protease family protein 2 from Arabidopsis thaliana (Mouse-ear cress).